A 112-amino-acid chain; its full sequence is T cell receptor alpha variable 17 (112 aa).

The first 21 residues, 1 to 21 (METLLGVSLVILWLQLARVNS), serve as a signal peptide directing secretion. In terms of domain architecture, Ig-like spans 22-112 (QQGEEDPQAL…DTASYFCATD (91 aa)). N-linked (GlcNAc...) asparagine glycosylation is found at N38 and N42. Residues C43 and C109 are joined by a disulfide bond.

In terms of assembly, alpha-beta TR is a heterodimer composed of an alpha and beta chain; disulfide-linked. The alpha-beta TR is associated with the transmembrane signaling CD3 coreceptor proteins to form the TR-CD3 (TcR or TCR). The assembly of alpha-beta TR heterodimers with CD3 occurs in the endoplasmic reticulum where a single alpha-beta TR heterodimer associates with one CD3D-CD3E heterodimer, one CD3G-CD3E heterodimer and one CD247 homodimer forming a stable octameric structure. CD3D-CD3E and CD3G-CD3E heterodimers preferentially associate with TR alpha and TR beta chains, respectively. The association of the CD247 homodimer is the last step of TcR assembly in the endoplasmic reticulum and is required for transport to the cell surface.

The protein resides in the cell membrane. V region of the variable domain of T cell receptor (TR) alpha chain that participates in the antigen recognition. Alpha-beta T cell receptors are antigen specific receptors which are essential to the immune response and are present on the cell surface of T lymphocytes. Recognize peptide-major histocompatibility (MH) (pMH) complexes that are displayed by antigen presenting cells (APC), a prerequisite for efficient T cell adaptive immunity against pathogens. Binding of alpha-beta TR to pMH complex initiates TR-CD3 clustering on the cell surface and intracellular activation of LCK that phosphorylates the ITAM motifs of CD3G, CD3D, CD3E and CD247 enabling the recruitment of ZAP70. In turn ZAP70 phosphorylates LAT, which recruits numerous signaling molecules to form the LAT signalosome. The LAT signalosome propagates signal branching to three major signaling pathways, the calcium, the mitogen-activated protein kinase (MAPK) kinase and the nuclear factor NF-kappa-B (NF-kB) pathways, leading to the mobilization of transcription factors that are critical for gene expression and essential for T cell growth and differentiation. The T cell repertoire is generated in the thymus, by V-(D)-J rearrangement. This repertoire is then shaped by intrathymic selection events to generate a peripheral T cell pool of self-MH restricted, non-autoaggressive T cells. Post-thymic interaction of alpha-beta TR with the pMH complexes shapes TR structural and functional avidity. In Homo sapiens (Human), this protein is T cell receptor alpha variable 17.